We begin with the raw amino-acid sequence, 109 residues long: Hainantoxin-XVIII (109 aa).

The signal sequence occupies residues 1–18 (MKLSIIIIATSLVIAVVA). The propeptide occupies 19–46 (FPSKDSKAIENDKTEQRMEIVVQETARA). 4 cysteine pairs are disulfide-bonded: C47–C62, C55–C68, C59–C108, and C61–C81.

The protein belongs to the neurotoxin 25 family. F7 subfamily. As to expression, expressed by the venom gland.

The protein localises to the secreted. In terms of biological role, putative ion channel inhibitor. The protein is Hainantoxin-XVIII of Cyriopagopus hainanus (Chinese bird spider).